The sequence spans 582 residues: Envelope glycoprotein (582 aa).

The first 35 residues, 1–35, serve as a signal peptide directing secretion; that stretch reads MDCLTDLRSTEGKVDQAGKTLILLVVWWGFGTTAE. The Extracellular portion of the chain corresponds to 36–519; sequence GHPLQQLWEL…DNPLWNGLNG (484 aa). The N-linked (GlcNAc...) asparagine; by host glycan is linked to asparagine 241. Positions 251 to 254 match the CXXC motif; the sequence is CWLC. 3 cysteine pairs are disulfide-bonded: cysteine 251-cysteine 254, cysteine 251-cysteine 481, and cysteine 473-cysteine 480. N-linked (GlcNAc...) asparagine; by host glycosylation is found at asparagine 301 and asparagine 314. The interval 396–416 is fusion peptide; the sequence is FIPLLVGLGITGATLAGGTGL. Coiled-coil stretches lie at residues 417–467 and 477–513; these read GVSV…LLTA and QEKC…DNPL. Residues 456–472 are immunosuppression; the sequence is LQNRRGLDLLTAEQGGI. The CX6CC signature appears at 473-481; that stretch reads CLALQEKCC. Residue asparagine 485 is glycosylated (N-linked (GlcNAc...) asparagine; by host). The chain crosses the membrane as a helical span at residues 520 to 540; that stretch reads FLPYLLPSLGPLFGLILFLTL. Residues 541 to 582 are Cytoplasmic-facing; that stretch reads GPCIRKTLTRIIHDKIQGSKNPRISPAVQATPNRDGYPRSMV. Cysteine 543 is lipidated: S-palmitoyl cysteine; by host. A compositionally biased stretch (polar residues) spans 562 to 572; it reads PRISPAVQATP. A disordered region spans residues 562–582; it reads PRISPAVQATPNRDGYPRSMV.

The mature envelope protein (Env) consists of a trimer of SU-TM heterodimers attached by a labile interchain disulfide bond. Post-translationally, specific enzymatic cleavages in vivo yield mature proteins. Envelope glycoproteins are synthesized as an inactive precursor that is N-glycosylated and processed likely by host cell furin or by a furin-like protease in the Golgi to yield the mature SU and TM proteins. The cleavage site between SU and TM requires the minimal sequence [KR]-X-[KR]-R. In terms of processing, the CXXC motif is highly conserved across a broad range of retroviral envelope proteins. It is thought to participate in the formation of a labile disulfide bond possibly with the CX6CC motif present in the transmembrane protein. Isomerization of the intersubunit disulfide bond to an SU intrachain disulfide bond is thought to occur upon receptor recognition in order to allow membrane fusion. The transmembrane protein is palmitoylated.

It localises to the virion membrane. Its subcellular location is the host cell membrane. In terms of biological role, the surface protein (SU) attaches the virus to the host cell by binding to its receptor. This interaction triggers the refolding of the transmembrane protein (TM) and is thought to activate its fusogenic potential by unmasking its fusion peptide. Fusion occurs at the host cell plasma membrane. Its function is as follows. The transmembrane protein (TM) acts as a class I viral fusion protein. Under the current model, the protein has at least 3 conformational states: pre-fusion native state, pre-hairpin intermediate state, and post-fusion hairpin state. During viral and target cell membrane fusion, the coiled coil regions (heptad repeats) assume a trimer-of-hairpins structure, positioning the fusion peptide in close proximity to the C-terminal region of the ectodomain. The formation of this structure appears to drive apposition and subsequent fusion of viral and target cell membranes. Membranes fusion leads to delivery of the nucleocapsid into the cytoplasm. This Galliformes protein is Envelope glycoprotein (env).